The primary structure comprises 176 residues: ATP synthase subunit delta (176 aa).

The protein belongs to the ATPase delta chain family. F-type ATPases have 2 components, F(1) - the catalytic core - and F(0) - the membrane proton channel. F(1) has five subunits: alpha(3), beta(3), gamma(1), delta(1), epsilon(1). F(0) has three main subunits: a(1), b(2) and c(10-14). The alpha and beta chains form an alternating ring which encloses part of the gamma chain. F(1) is attached to F(0) by a central stalk formed by the gamma and epsilon chains, while a peripheral stalk is formed by the delta and b chains.

The protein localises to the cell inner membrane. F(1)F(0) ATP synthase produces ATP from ADP in the presence of a proton or sodium gradient. F-type ATPases consist of two structural domains, F(1) containing the extramembraneous catalytic core and F(0) containing the membrane proton channel, linked together by a central stalk and a peripheral stalk. During catalysis, ATP synthesis in the catalytic domain of F(1) is coupled via a rotary mechanism of the central stalk subunits to proton translocation. Functionally, this protein is part of the stalk that links CF(0) to CF(1). It either transmits conformational changes from CF(0) to CF(1) or is implicated in proton conduction. In Polaromonas sp. (strain JS666 / ATCC BAA-500), this protein is ATP synthase subunit delta.